We begin with the raw amino-acid sequence, 344 residues long: Protein Tob2 (344 aa).

Disordered regions lie at residues 144–169 (GSQDSSLSNSPSPSFGQSPSPTFIPR) and 191–225 (MKKGGGAASGGGVASSGAGGQQPPQQPRMARSPTN). Residues 145-164 (SQDSSLSNSPSPSFGQSPSP) are compositionally biased toward low complexity. Residues 194–210 (GGGAASGGGVASSGAGG) show a composition bias toward gly residues. Low complexity predominate over residues 211-225 (QQPPQQPRMARSPTN). A Phosphoserine modification is found at serine 254.

The protein belongs to the BTG family. Associates with CAF1. Ubiquitous.

It is found in the cytoplasm. Functionally, anti-proliferative protein inhibits cell cycle progression from the G0/G1 to S phases. The sequence is that of Protein Tob2 (TOB2) from Homo sapiens (Human).